A 227-amino-acid chain; its full sequence is Lipoprotein-releasing system ATP-binding protein LolD (227 aa).

The 223-residue stretch at 5–227 folds into the ABC transporter domain; that stretch reads LICQNITKHY…QDGILRESNS (223 aa). 41–48 contributes to the ATP binding site; sequence GSSGSGKS.

It belongs to the ABC transporter superfamily. Lipoprotein translocase (TC 3.A.1.125) family. As to quaternary structure, the complex is composed of two ATP-binding proteins (LolD) and two transmembrane proteins (LolC and LolE).

It localises to the cell inner membrane. Functionally, part of the ABC transporter complex LolCDE involved in the translocation of mature outer membrane-directed lipoproteins, from the inner membrane to the periplasmic chaperone, LolA. Responsible for the formation of the LolA-lipoprotein complex in an ATP-dependent manner. In Histophilus somni (strain 129Pt) (Haemophilus somnus), this protein is Lipoprotein-releasing system ATP-binding protein LolD.